A 206-amino-acid polypeptide reads, in one-letter code: MSVLGVGPRTVTPHLRKGMMESSSGISLARAEAFLRLFAILVLVLTACLLGFDTQTKLLFSTIKKTATFRDLGALQVVVYVDSVAAGYNLLQLGRGFISAKLKGKLINVSYVTLPWVCFLLDQAAVYTVFSANTAALQASIIAVTGESSLQWMKVCNRYTRFCIQVGGALLSGYLASLLMVLLSSLSAFSLFRLYSPKQFHLLKPT.

Over 1-31 (MSVLGVGPRTVTPHLRKGMMESSSGISLARA) the chain is Cytoplasmic. The chain crosses the membrane as a helical span at residues 32-52 (EAFLRLFAILVLVLTACLLGF). Over 53 to 71 (DTQTKLLFSTIKKTATFRD) the chain is Extracellular. The helical transmembrane segment at 72-92 (LGALQVVVYVDSVAAGYNLLQ) threads the bilayer. The Cytoplasmic portion of the chain corresponds to 93-111 (LGRGFISAKLKGKLINVSY). A helical transmembrane segment spans residues 112–132 (VTLPWVCFLLDQAAVYTVFSA). Residues 133-161 (NTAALQASIIAVTGESSLQWMKVCNRYTR) lie on the Extracellular side of the membrane. The helical transmembrane segment at 162–182 (FCIQVGGALLSGYLASLLMVL) threads the bilayer. Residues 183–206 (LSSLSAFSLFRLYSPKQFHLLKPT) are Cytoplasmic-facing.

The protein belongs to the Casparian strip membrane proteins (CASP) family. Homodimer and heterodimers.

Its subcellular location is the cell membrane. The polypeptide is CASP-like protein 2C1 (Vitis vinifera (Grape)).